Here is a 321-residue protein sequence, read N- to C-terminus: Gap junction delta-2 protein (321 aa).

The Cytoplasmic portion of the chain corresponds to 1 to 19 (MGEWTILERLLEAAVQQHS). Residues 20–42 (TMIGRILLTVVVIFRILIVAIVG) form a helical membrane-spanning segment. Residues 43 to 75 (ETVYDDEQTMFVCNTLQPGCNQACYDRAFPISH) lie on the Extracellular side of the membrane. Residues 76–98 (IRYWVFQIIMVCTPSLCFITYSV) traverse the membrane as a helical segment. The Cytoplasmic portion of the chain corresponds to 99–197 (HQSAKQRERR…KLRRQEGISR (99 aa)). The disordered stretch occupies residues 117 to 141 (DRDPPESMGGPGGTGGGGSGGGKRE). The span at 125–137 (GGPGGTGGGGSGG) shows a compositional bias: gly residues. Residues 198-220 (FYIIQVVFRNALEIGFLVGQYFL) form a helical membrane-spanning segment. The Extracellular portion of the chain corresponds to 221–252 (YGFSVPGLYECDRYPCIKEVECYVSRPTEKTV). The chain crosses the membrane as a helical span at residues 253 to 275 (FLVFMFAVSGICVVLNLAELNHL). Residues 276-321 (GWRKIKLAVRGAQAKRKSVYEIRNKDLPRVSVPNFGRTQSSDSAYV) lie on the Cytoplasmic side of the membrane.

The protein belongs to the connexin family. Delta-type subfamily. A connexon is composed of a hexamer of connexins.

The protein localises to the cell membrane. Its subcellular location is the cell junction. It localises to the gap junction. Its function is as follows. One gap junction consists of a cluster of closely packed pairs of transmembrane channels, the connexons, through which materials of low MW diffuse from one cell to a neighboring cell. The chain is Gap junction delta-2 protein (GJD2) from Bos taurus (Bovine).